The primary structure comprises 94 residues: Large ribosomal subunit protein bL27 (94 aa).

Residues 1–9 (MLKLNLQFF) constitute a propeptide that is removed on maturation. The segment at 12–32 (KKGVSSTKNGRDSESKRLGAK) is disordered. Basic and acidic residues predominate over residues 20–32 (NGRDSESKRLGAK).

The protein belongs to the bacterial ribosomal protein bL27 family. Post-translationally, the N-terminus is cleaved by ribosomal processing cysteine protease Prp.

This is Large ribosomal subunit protein bL27 from Staphylococcus carnosus (strain TM300).